The sequence spans 158 residues: Cyclic pyranopterin monophosphate synthase (158 aa).

Substrate-binding positions include 73–75 (LCH) and 110–111 (ME). The active site involves D125.

The protein belongs to the MoaC family. In terms of assembly, homohexamer; trimer of dimers.

It catalyses the reaction (8S)-3',8-cyclo-7,8-dihydroguanosine 5'-triphosphate = cyclic pyranopterin phosphate + diphosphate. Its pathway is cofactor biosynthesis; molybdopterin biosynthesis. Functionally, catalyzes the conversion of (8S)-3',8-cyclo-7,8-dihydroguanosine 5'-triphosphate to cyclic pyranopterin monophosphate (cPMP). In Ectopseudomonas mendocina (strain ymp) (Pseudomonas mendocina), this protein is Cyclic pyranopterin monophosphate synthase.